The chain runs to 3790 residues: Transcription-associated protein 1 (3790 aa).

HEAT repeat units lie at residues 98 to 136, 335 to 381, 740 to 778, 1185 to 1223, 1332 to 1370, and 1826 to 1864; these read RQHV…HFRP, TDLR…HVRQ, DLLY…ELCL, AKAT…IQSK, IGYK…GVTL, and AIHK…AMPL. The FAT domain occupies 2610–3173; the sequence is LLAYLGKSHN…YFPIRTLYLT (564 aa). Residues 3429–3753 form the PI3K/PI4K catalytic domain; sequence MPRVEIVQKN…AVDIIMTRFN (325 aa). The segment at 3435 to 3441 is G-loop; the sequence is VQKNNTA. Positions 3616–3624 are catalytic loop; it reads NLTRLNADM. The tract at residues 3636–3661 is activation loop; that stretch reads ISYFKFDVNDDKCQLNQHRPVPFRLT. Residues 3758-3790 enclose the FATC domain; sequence FDSIENKKISVLVQSATNIDNLCRMDPAWHPWL.

Belongs to the PI3/PI4-kinase family. TRA1 subfamily. In terms of assembly, component of the Tip60 chromatin-remodeling complex which contains the catalytic subunit Tip60 and the subunits Domino, Tra1, Brd8, E(Pc), DMAP1, Pontin, Reptin, Ing3, Act87E, BAP55, Mrg15, MrgBP, Gas41 and YL-1. Probable component of some SAGA complex. Interacts with Spt3, Gcn5, Ada3 and Ada2b. Ubiquitous.

The protein localises to the nucleus. Its subcellular location is the cytoplasm. The protein resides in the chromosome. Its function is as follows. Part of the Tip60 chromatin-remodeling complex which is involved in DNA repair. Upon induction of DNA double-strand breaks, this complex acetylates phosphorylated H2AV in nucleosomes and exchanges it with unmodified H2AV. During wing development, required for activity of Notch and its coactivator mam. Function in promoting mam function is likely to involve both the Tip60 and SAGA complexes. The polypeptide is Transcription-associated protein 1 (Nipped-A) (Drosophila melanogaster (Fruit fly)).